The primary structure comprises 263 residues: Isoprenyl transferase (263 aa).

The active site involves D26. D26 contributes to the Mg(2+) binding site. Residues 27–30 (GNGR), W31, R39, H43, and 71–73 (SSE) each bind substrate. The active-site Proton acceptor is N74. Residues W75, R77, R191, and 197-199 (RIS) contribute to the substrate site. A Mg(2+)-binding site is contributed by E210. The disordered stretch occupies residues 241-263 (GRTSEQIAGQQENKNTVSNEDRV). The segment covering 243 to 263 (TSEQIAGQQENKNTVSNEDRV) has biased composition (polar residues).

Belongs to the UPP synthase family. As to quaternary structure, homodimer. Mg(2+) is required as a cofactor.

In terms of biological role, catalyzes the condensation of isopentenyl diphosphate (IPP) with allylic pyrophosphates generating different type of terpenoids. This is Isoprenyl transferase from Nitrosomonas europaea (strain ATCC 19718 / CIP 103999 / KCTC 2705 / NBRC 14298).